Reading from the N-terminus, the 115-residue chain is Large ribosomal subunit protein bL19 (115 aa).

Belongs to the bacterial ribosomal protein bL19 family.

Its function is as follows. This protein is located at the 30S-50S ribosomal subunit interface and may play a role in the structure and function of the aminoacyl-tRNA binding site. The protein is Large ribosomal subunit protein bL19 of Francisella tularensis subsp. holarctica (strain FTNF002-00 / FTA).